The sequence spans 154 residues: 6,7-dimethyl-8-ribityllumazine synthase (154 aa).

5-amino-6-(D-ribitylamino)uracil-binding positions include tryptophan 22, 56–58 (AWE), and 80–82 (CVI). 85–86 (DT) is a (2S)-2-hydroxy-3-oxobutyl phosphate binding site. Catalysis depends on histidine 88, which acts as the Proton donor. Residue asparagine 113 coordinates 5-amino-6-(D-ribitylamino)uracil. (2S)-2-hydroxy-3-oxobutyl phosphate is bound at residue arginine 127.

It belongs to the DMRL synthase family. Forms an icosahedral capsid composed of 60 subunits, arranged as a dodecamer of pentamers.

The catalysed reaction is (2S)-2-hydroxy-3-oxobutyl phosphate + 5-amino-6-(D-ribitylamino)uracil = 6,7-dimethyl-8-(1-D-ribityl)lumazine + phosphate + 2 H2O + H(+). The protein operates within cofactor biosynthesis; riboflavin biosynthesis; riboflavin from 2-hydroxy-3-oxobutyl phosphate and 5-amino-6-(D-ribitylamino)uracil: step 1/2. Functionally, catalyzes the formation of 6,7-dimethyl-8-ribityllumazine by condensation of 5-amino-6-(D-ribitylamino)uracil with 3,4-dihydroxy-2-butanone 4-phosphate. This is the penultimate step in the biosynthesis of riboflavin. The protein is 6,7-dimethyl-8-ribityllumazine synthase of Xanthomonas campestris pv. campestris (strain 8004).